The chain runs to 48 residues: Large ribosomal subunit protein eL40 (48 aa).

Belongs to the eukaryotic ribosomal protein eL40 family.

This Methanobrevibacter smithii (strain ATCC 35061 / DSM 861 / OCM 144 / PS) protein is Large ribosomal subunit protein eL40.